A 509-amino-acid chain; its full sequence is Maturase K (509 aa).

Belongs to the intron maturase 2 family. MatK subfamily.

It is found in the plastid. Its subcellular location is the chloroplast. In terms of biological role, usually encoded in the trnK tRNA gene intron. Probably assists in splicing its own and other chloroplast group II introns. The chain is Maturase K from Nicotiana plumbaginifolia (Leadwort-leaved tobacco).